We begin with the raw amino-acid sequence, 635 residues long: Threonine--tRNA ligase (635 aa).

One can recognise a TGS domain in the interval 1-61 (MVSIRLPDGS…DHDVALAIVT (61 aa)). The interval 242–533 (DHRKLGKQLD…LIEHHAGAMP (292 aa)) is catalytic. Zn(2+)-binding residues include C333, H384, and H510.

Belongs to the class-II aminoacyl-tRNA synthetase family. Homodimer. Requires Zn(2+) as cofactor.

The protein resides in the cytoplasm. It catalyses the reaction tRNA(Thr) + L-threonine + ATP = L-threonyl-tRNA(Thr) + AMP + diphosphate + H(+). Catalyzes the attachment of threonine to tRNA(Thr) in a two-step reaction: L-threonine is first activated by ATP to form Thr-AMP and then transferred to the acceptor end of tRNA(Thr). Also edits incorrectly charged L-seryl-tRNA(Thr). This Paraburkholderia phytofirmans (strain DSM 17436 / LMG 22146 / PsJN) (Burkholderia phytofirmans) protein is Threonine--tRNA ligase.